Consider the following 1343-residue polypeptide: DNA-directed RNA polymerase subunit beta (1343 aa).

Belongs to the RNA polymerase beta chain family. In terms of assembly, the RNAP catalytic core consists of 2 alpha, 1 beta, 1 beta' and 1 omega subunit. When a sigma factor is associated with the core the holoenzyme is formed, which can initiate transcription.

It catalyses the reaction RNA(n) + a ribonucleoside 5'-triphosphate = RNA(n+1) + diphosphate. In terms of biological role, DNA-dependent RNA polymerase catalyzes the transcription of DNA into RNA using the four ribonucleoside triphosphates as substrates. This is DNA-directed RNA polymerase subunit beta from Shewanella baltica (strain OS155 / ATCC BAA-1091).